Reading from the N-terminus, the 190-residue chain is Protein PLANT CADMIUM RESISTANCE 8 (190 aa).

The disordered stretch occupies residues 1–31; the sequence is MGRVTTPSEEDSNNGLPVQQPGTPNQRTRVP. Residues 13–28 are compositionally biased toward polar residues; sequence NNGLPVQQPGTPNQRT. Residue Thr23 is modified to Phosphothreonine. Residues 94–113 form a helical membrane-spanning segment; sequence LGTFMYLLMMPALCSHWVMG.

This sequence belongs to the cornifelin family.

The protein resides in the cell membrane. May be involved in heavy metals transport. The protein is Protein PLANT CADMIUM RESISTANCE 8 (PCR8) of Arabidopsis thaliana (Mouse-ear cress).